The following is a 244-amino-acid chain: tRNA (guanine-N(7)-)-methyltransferase (244 aa).

4 residues coordinate S-adenosyl-L-methionine: E75, E100, D127, and D150. D150 is a catalytic residue. Substrate-binding positions include K154, D186, and 223 to 226 (TRFE).

Belongs to the class I-like SAM-binding methyltransferase superfamily. TrmB family.

The enzyme catalyses guanosine(46) in tRNA + S-adenosyl-L-methionine = N(7)-methylguanosine(46) in tRNA + S-adenosyl-L-homocysteine. Its pathway is tRNA modification; N(7)-methylguanine-tRNA biosynthesis. Functionally, catalyzes the formation of N(7)-methylguanine at position 46 (m7G46) in tRNA. This is tRNA (guanine-N(7)-)-methyltransferase from Xylella fastidiosa (strain 9a5c).